The sequence spans 560 residues: Putative transport protein VV1438 (560 aa).

Helical transmembrane passes span 5-25 (VVLLLQQNPILLIFVVLAIGL), 37-57 (LGNSIGVLITSLIMGHLGFSF), 66-86 (FMLFIYCVGIEAGPNFFGIFF), 91-111 (HYFTLSMVVLVTAVSISYFAS), and 164-184 (VGYAMAYLVGLISMIMFAKLL). 2 consecutive RCK C-terminal domains span residues 203-292 (RGLG…FRNG) and 293-376 (KEVF…RIGF). 6 helical membrane passes run 386 to 406 (LLAFCSFFILGIMFGLVTMTF), 409 to 429 (VSFSLGNAVGLLLSGITLGFL), 443 to 463 (ALNMVKDLGLMIFMVGIGLSA), 478 to 498 (IIGIAFLVSVVPVFFAYLVGA), 506 to 526 (ALLFGAIIGARTCAPAMDIVN), and 539 to 559 (AGTYAIANILMTLAGTILIIL).

Belongs to the AAE transporter (TC 2.A.81) family. YbjL subfamily.

It is found in the cell membrane. The polypeptide is Putative transport protein VV1438 (Vibrio vulnificus (strain YJ016)).